Reading from the N-terminus, the 349-residue chain is Hydroxymethylglutaryl-CoA synthase (349 aa).

A (3S)-3-hydroxy-3-methylglutaryl-CoA-binding site is contributed by Asp-30. Residue Glu-82 is the Proton donor/acceptor of the active site. Residue Cys-114 coordinates (3S)-3-hydroxy-3-methylglutaryl-CoA. Residue Cys-114 is the Acyl-thioester intermediate of the active site. Arg-203 provides a ligand contact to CoA. 2 residues coordinate (3S)-3-hydroxy-3-methylglutaryl-CoA: Thr-205 and His-238. Catalysis depends on His-238, which acts as the Proton donor/acceptor. Lys-243 contributes to the CoA binding site. Residues Lys-247, Asn-270, and Ser-300 each coordinate (3S)-3-hydroxy-3-methylglutaryl-CoA.

It belongs to the thiolase-like superfamily. Archaeal HMG-CoA synthase family. In terms of assembly, interacts with acetoacetyl-CoA thiolase that catalyzes the precedent step in the pathway and with a DUF35 protein. The acetoacetyl-CoA thiolase/HMG-CoA synthase complex channels the intermediate via a fused CoA-binding site, which allows for efficient coupling of the endergonic thiolase reaction with the exergonic HMGCS reaction.

The enzyme catalyses acetoacetyl-CoA + acetyl-CoA + H2O = (3S)-3-hydroxy-3-methylglutaryl-CoA + CoA + H(+). It functions in the pathway metabolic intermediate biosynthesis; (R)-mevalonate biosynthesis; (R)-mevalonate from acetyl-CoA: step 2/3. Its function is as follows. Catalyzes the condensation of acetyl-CoA with acetoacetyl-CoA to form 3-hydroxy-3-methylglutaryl-CoA (HMG-CoA). Functions in the mevalonate (MVA) pathway leading to isopentenyl diphosphate (IPP), a key precursor for the biosynthesis of isoprenoid compounds that are building blocks of archaeal membrane lipids. This is Hydroxymethylglutaryl-CoA synthase from Methanothermococcus thermolithotrophicus (Methanococcus thermolithotrophicus).